An 89-amino-acid chain; its full sequence is Small ribosomal subunit protein uS15 (89 aa).

Belongs to the universal ribosomal protein uS15 family. As to quaternary structure, part of the 30S ribosomal subunit. Forms a bridge to the 50S subunit in the 70S ribosome, contacting the 23S rRNA.

Functionally, one of the primary rRNA binding proteins, it binds directly to 16S rRNA where it helps nucleate assembly of the platform of the 30S subunit by binding and bridging several RNA helices of the 16S rRNA. Forms an intersubunit bridge (bridge B4) with the 23S rRNA of the 50S subunit in the ribosome. This is Small ribosomal subunit protein uS15 from Exiguobacterium sibiricum (strain DSM 17290 / CCUG 55495 / CIP 109462 / JCM 13490 / 255-15).